The following is a 173-amino-acid chain: Alpha-crystallin A chain (173 aa).

M1 bears the N-acetylmethionine mark. Residues 1-63 (MDVTIQHPWF…RTVLDSGVSE (63 aa)) form a required for complex formation with BFSP1 and BFSP2 region. Deamidated glutamine; partial is present on Q6. S45 is subject to Phosphoserine. A Deamidated glutamine; partial modification is found at Q50. One can recognise a sHSP domain in the interval 52-162 (LFRTVLDSGV…GHSERAIPVS (111 aa)). N6-acetyllysine is present on K70. Deamidated glutamine; partial is present on Q90. K99 carries the N6-acetyllysine modification. H100 contacts Zn(2+). A Deamidated asparagine; partial modification is found at N101. E102 and H107 together coordinate Zn(2+). The residue at position 122 (S122) is a Phosphoserine. The residue at position 123 (N123) is a Deamidated asparagine; partial. Positions 145–173 (KVQSGLDAGHSERAIPVSREEKPSSAPSS) are disordered. Q147 carries the deamidated glutamine; partial modification. The segment covering 153-167 (GHSERAIPVSREEKP) has biased composition (basic and acidic residues). H154 provides a ligand contact to Zn(2+). O-linked (GlcNAc) serine glycosylation is present at S162.

Belongs to the small heat shock protein (HSP20) family. As to quaternary structure, heteromer composed of three CRYAA and one CRYAB subunits. Inter-subunit bridging via zinc ions enhances stability, which is crucial as there is no protein turn over in the lens. Can also form homodimers and homotetramers (dimers of dimers) which serve as the building blocks of homooligomers. Within homooligomers, the zinc-binding motif is created from residues of 3 different molecules. His-100 and Glu-102 from one molecule are ligands of the zinc ion, and His-107 and His-154 residues from additional molecules complete the site with tetrahedral coordination geometry. Part of a complex required for lens intermediate filament formation composed of BFSP1, BFSP2 and CRYAA. Post-translationally, acetylation at Lys-70 may increase chaperone activity. Undergoes age-dependent proteolytical cleavage at the C-terminus.

It localises to the cytoplasm. The protein resides in the nucleus. Functionally, contributes to the transparency and refractive index of the lens. Acts as a chaperone, preventing aggregation of various proteins under a wide range of stress conditions. Required for the correct formation of lens intermediate filaments as part of a complex composed of BFSP1, BFSP2 and CRYAA. In Eulemur fulvus fulvus (Brown lemur), this protein is Alpha-crystallin A chain (CRYAA).